The sequence spans 101 residues: Urease subunit beta (101 aa).

The protein belongs to the urease beta subunit family. As to quaternary structure, heterotrimer of UreA (gamma), UreB (beta) and UreC (alpha) subunits. Three heterotrimers associate to form the active enzyme.

The protein localises to the cytoplasm. The enzyme catalyses urea + 2 H2O + H(+) = hydrogencarbonate + 2 NH4(+). Its pathway is nitrogen metabolism; urea degradation; CO(2) and NH(3) from urea (urease route): step 1/1. The chain is Urease subunit beta from Rhodopseudomonas palustris (strain ATCC BAA-98 / CGA009).